Reading from the N-terminus, the 310-residue chain is Methionyl-tRNA formyltransferase (310 aa).

110–113 (SVLP) is a (6S)-5,6,7,8-tetrahydrofolate binding site.

The protein belongs to the Fmt family.

The catalysed reaction is L-methionyl-tRNA(fMet) + (6R)-10-formyltetrahydrofolate = N-formyl-L-methionyl-tRNA(fMet) + (6S)-5,6,7,8-tetrahydrofolate + H(+). In terms of biological role, attaches a formyl group to the free amino group of methionyl-tRNA(fMet). The formyl group appears to play a dual role in the initiator identity of N-formylmethionyl-tRNA by promoting its recognition by IF2 and preventing the misappropriation of this tRNA by the elongation apparatus. In Mycolicibacterium vanbaalenii (strain DSM 7251 / JCM 13017 / BCRC 16820 / KCTC 9966 / NRRL B-24157 / PYR-1) (Mycobacterium vanbaalenii), this protein is Methionyl-tRNA formyltransferase.